The primary structure comprises 122 residues: Neuropeptide B (122 aa).

A signal peptide spans 1–24; it reads MAGPAMLVAAALALCLLLASPGLA. Tryptophan 25 carries the 6'-bromotryptophan modification. The propeptide occupies 56–122; that stretch reads SEPRGGTRSL…LSLSASDCRK (67 aa).

The protein belongs to the neuropeptide B/W family.

Its subcellular location is the secreted. Its function is as follows. May be involved in the regulation of feeding, neuroendocrine system, memory, learning and in the afferent pain pathway. In Bos taurus (Bovine), this protein is Neuropeptide B (NPB).